The following is a 146-amino-acid chain: Anti-sigma F factor (146 aa).

Belongs to the anti-sigma-factor family.

The catalysed reaction is L-seryl-[protein] + ATP = O-phospho-L-seryl-[protein] + ADP + H(+). The enzyme catalyses L-threonyl-[protein] + ATP = O-phospho-L-threonyl-[protein] + ADP + H(+). Functionally, binds to sigma F and blocks its ability to form an RNA polymerase holoenzyme (E-sigma F). Phosphorylates SpoIIAA on a serine residue. This phosphorylation may enable SpoIIAA to act as an anti-anti-sigma factor that counteracts SpoIIAB and thus releases sigma F from inhibition. The protein is Anti-sigma F factor of Anoxybacillus flavithermus (strain DSM 21510 / WK1).